A 199-amino-acid polypeptide reads, in one-letter code: Superoxide dismutase [Fe] (199 aa).

Fe cation is bound by residues His27, His74, Asp158, and His162.

This sequence belongs to the iron/manganese superoxide dismutase family. Homodimer. Fe cation serves as cofactor.

It catalyses the reaction 2 superoxide + 2 H(+) = H2O2 + O2. Its function is as follows. Destroys superoxide anion radicals which are normally produced within the cells and which are toxic to biological systems. The chain is Superoxide dismutase [Fe] (SODB) from Babesia bovis.